The following is a 344-amino-acid chain: MLNALYPLFRPALFSMDAEDAHHFTLNNLLRAHRMGLGSCIGNRIAEDPHTVMGVRFPNPVGLAAGLDKDGAYIDGLAALGFGFIEVGTVTPRAQPGNPRPRMFRLPQADALINRMGFNNGGVDAFVANVRASRWKAEGGVLGLNIGKNADTPIERANDDYLYCLERVYPHASYVTVNISSPNTKNLRQLQGASELDSLLSSLKDAQQRLADQHKRYVPLALKIAPDLDADQIGNIGDALVRHKIDGVIATNTTISREAVKGLPHAEEAGGLSGRPVFEASTRVVRALRGVVGDAVPVIGVGGIFGGADARAKIEAGASLVQLYSGLIYRGPALVRECAAALRG.

FMN-binding positions include 65 to 69 and threonine 89; that span reads AGLDK. Lysine 69 serves as a coordination point for substrate. Residue 114 to 118 coordinates substrate; the sequence is NRMGF. Asparagine 145 and asparagine 178 together coordinate FMN. Asparagine 178 provides a ligand contact to substrate. Serine 181 serves as the catalytic Nucleophile. Asparagine 183 contributes to the substrate binding site. Residues lysine 223 and threonine 251 each coordinate FMN. 252–253 is a substrate binding site; that stretch reads NT. Residues glycine 274, glycine 303, and 324-325 each bind FMN; that span reads YS.

This sequence belongs to the dihydroorotate dehydrogenase family. Type 2 subfamily. As to quaternary structure, monomer. Requires FMN as cofactor.

Its subcellular location is the cell membrane. The catalysed reaction is (S)-dihydroorotate + a quinone = orotate + a quinol. It functions in the pathway pyrimidine metabolism; UMP biosynthesis via de novo pathway; orotate from (S)-dihydroorotate (quinone route): step 1/1. Functionally, catalyzes the conversion of dihydroorotate to orotate with quinone as electron acceptor. The sequence is that of Dihydroorotate dehydrogenase (quinone) from Cupriavidus taiwanensis (strain DSM 17343 / BCRC 17206 / CCUG 44338 / CIP 107171 / LMG 19424 / R1) (Ralstonia taiwanensis (strain LMG 19424)).